Reading from the N-terminus, the 503-residue chain is ATP synthase subunit alpha (503 aa).

170-177 serves as a coordination point for ATP; it reads GDKQTGKT.

It belongs to the ATPase alpha/beta chains family. F-type ATPases have 2 components, CF(1) - the catalytic core - and CF(0) - the membrane proton channel. CF(1) has five subunits: alpha(3), beta(3), gamma(1), delta(1), epsilon(1). CF(0) has three main subunits: a(1), b(2) and c(9-12). The alpha and beta chains form an alternating ring which encloses part of the gamma chain. CF(1) is attached to CF(0) by a central stalk formed by the gamma and epsilon chains, while a peripheral stalk is formed by the delta and b chains.

The protein resides in the cell inner membrane. The catalysed reaction is ATP + H2O + 4 H(+)(in) = ADP + phosphate + 5 H(+)(out). Its function is as follows. Produces ATP from ADP in the presence of a proton gradient across the membrane. The alpha chain is a regulatory subunit. The polypeptide is ATP synthase subunit alpha (Helicobacter pylori (strain P12)).